Here is a 71-residue protein sequence, read N- to C-terminus: uncharacterized protein (71 aa).

2 consecutive transmembrane segments (helical) span residues 9-29 and 41-61; these read FVIFSLFFTFISVSTFGNINF and FVALFYIFTHTSFTSLCFFGL.

It localises to the membrane. This is an uncharacterized protein from Acheta domesticus (House cricket).